Here is a 138-residue protein sequence, read N- to C-terminus: Drosulfakinins (138 aa).

A signal peptide spans 1 to 33; sequence MGLRSCTHFATLVMPLWALAFCFLVLVPVPAQT. A propeptide spanning residues 34–73 is cleaved from the precursor; that stretch reads TSLQISKGDRRLQDLESNMGAESDQPNANLVGTSLSRFGD. A Phenylalanine amide modification is found at Phe82. Residues 86–108 constitute a propeptide that is removed on maturation; that stretch reads VPRPIIPIELDLLMDNDDENTKA. Tyr114 is subject to Sulfotyrosine. Phe119 carries the phenylalanine amide modification. Tyr131 is modified (sulfotyrosine). Phe136 carries the phenylalanine amide modification.

Belongs to the gastrin/cholecystokinin family.

Its subcellular location is the secreted. Its function is as follows. Drosulfakinin-0 (DSK 0) plays diverse biological roles including regulating gut muscle contraction in adults but not in larvae. This Drosophila teissieri (Fruit fly) protein is Drosulfakinins.